Reading from the N-terminus, the 61-residue chain is Small ribosomal subunit protein uS14 (61 aa).

Residues cysteine 24, cysteine 27, cysteine 40, and cysteine 43 each contribute to the Zn(2+) site.

This sequence belongs to the universal ribosomal protein uS14 family. Zinc-binding uS14 subfamily. As to quaternary structure, part of the 30S ribosomal subunit. Contacts proteins S3 and S10. Zn(2+) serves as cofactor.

In terms of biological role, binds 16S rRNA, required for the assembly of 30S particles and may also be responsible for determining the conformation of the 16S rRNA at the A site. This is Small ribosomal subunit protein uS14 from Mycoplasma genitalium (strain ATCC 33530 / DSM 19775 / NCTC 10195 / G37) (Mycoplasmoides genitalium).